We begin with the raw amino-acid sequence, 124 residues long: Seripauperin-15 (124 aa).

A signal peptide spans 1–20; the sequence is MVKLTSIAAGVAAIAAGVAA.

This sequence belongs to the SRP1/TIP1 family. Seripauperin subfamily.

In Saccharomyces cerevisiae (strain ATCC 204508 / S288c) (Baker's yeast), this protein is Seripauperin-15 (PAU15).